The chain runs to 285 residues: NADPH-dependent 7-cyano-7-deazaguanine reductase (285 aa).

91–93 (IES) is a binding site for substrate. Position 93–94 (93–94 (SK)) interacts with NADPH. The Thioimide intermediate role is filled by C191. Catalysis depends on D198, which acts as the Proton donor. 230 to 231 (HE) is a substrate binding site. 259-260 (RG) is an NADPH binding site.

The protein belongs to the GTP cyclohydrolase I family. QueF type 2 subfamily. Homodimer.

The protein resides in the cytoplasm. It carries out the reaction 7-aminomethyl-7-carbaguanine + 2 NADP(+) = 7-cyano-7-deazaguanine + 2 NADPH + 3 H(+). It participates in tRNA modification; tRNA-queuosine biosynthesis. Its function is as follows. Catalyzes the NADPH-dependent reduction of 7-cyano-7-deazaguanine (preQ0) to 7-aminomethyl-7-deazaguanine (preQ1). This Legionella pneumophila (strain Corby) protein is NADPH-dependent 7-cyano-7-deazaguanine reductase.